We begin with the raw amino-acid sequence, 301 residues long: Putative ribosomal RNA methyltransferase PB17E12.10c (301 aa).

The S-adenosyl-L-methionine site is built by Gly87, Trp89, Asp107, and Asp186. Lys247 (proton acceptor) is an active-site residue.

It belongs to the class I-like SAM-binding methyltransferase superfamily. RNA methyltransferase RlmE family.

The catalysed reaction is a uridine in rRNA + S-adenosyl-L-methionine = a 2'-O-methyluridine in rRNA + S-adenosyl-L-homocysteine + H(+). The protein is Putative ribosomal RNA methyltransferase PB17E12.10c of Schizosaccharomyces pombe (strain 972 / ATCC 24843) (Fission yeast).